The chain runs to 227 residues: Transcription antitermination protein NusB (227 aa).

Disordered stretches follow at residues 165–189 and 201–227; these read ASES…SDED and AEET…ADES. 2 stretches are compositionally biased toward acidic residues: residues 178-189 and 201-214; these read DDSDALDDSDED and AEET…AEDS. Residues 215–227 show a composition bias toward basic and acidic residues; it reads EVSKVSEEKADES.

It belongs to the NusB family.

Functionally, involved in transcription antitermination. Required for transcription of ribosomal RNA (rRNA) genes. Binds specifically to the boxA antiterminator sequence of the ribosomal RNA (rrn) operons. The polypeptide is Transcription antitermination protein NusB (Corynebacterium glutamicum (strain ATCC 13032 / DSM 20300 / JCM 1318 / BCRC 11384 / CCUG 27702 / LMG 3730 / NBRC 12168 / NCIMB 10025 / NRRL B-2784 / 534)).